A 71-amino-acid chain; its full sequence is UPF0346 protein MGAS2096_Spy0401 (71 aa).

The protein belongs to the UPF0346 family.

This is UPF0346 protein MGAS2096_Spy0401 from Streptococcus pyogenes serotype M12 (strain MGAS2096).